The sequence spans 258 residues: MAGVVEQKSGLVRDKLGEASKRNGLINTRSLVAESRDGLVSVYPAPQYQSCRVVGSVASAGPDGARNEPLQQLLDPSTLQQSVESRYRPNLILYSESVLRPWGDGVAADCCETTFIEDRSPTKESLEYPDGKFIDLSPEDIKIHTLSYDVEEEEEFQELESDYSSDTESEDNFLVMPPRDHLGLSVFSMLCCFWPLGIAAFYLSHETNKAVAKGDFHQASTSSRRALFLAVLSITIGTGIYVGVAVALIAYLSKSNHL.

The Cytoplasmic segment spans residues 1-181; that stretch reads MAGVVEQKSG…NFLVMPPRDH (181 aa). At Ser137 the chain carries Phosphoserine. The helical transmembrane segment at 182–202 threads the bilayer; the sequence is LGLSVFSMLCCFWPLGIAAFY. At 203–228 the chain is on the extracellular side; it reads LSHETNKAVAKGDFHQASTSSRRALF. Residues 229–249 constitute an intramembrane region (helical); the sequence is LAVLSITIGTGIYVGVAVALI. Residues 250 to 258 are Extracellular-facing; the sequence is AYLSKSNHL.

The protein belongs to the CD225/Dispanin family. In terms of assembly, homodimer. Interacts with GRIA1 and GRIA2.

The protein resides in the cell membrane. It localises to the early endosome membrane. It is found in the postsynaptic density membrane. The protein localises to the synapse. Its subcellular location is the cell projection. The protein resides in the dendrite. It localises to the dendritic spine. In terms of biological role, may regulate AMPA receptor content at nascent synapses, and have a role in postsynaptic development and maturation. The protein is Synapse differentiation-inducing gene protein 1 (SYNDIG1) of Bos taurus (Bovine).